We begin with the raw amino-acid sequence, 172 residues long: uncharacterized protein (172 aa).

The span at 1-17 (MISLDKDENEIEHHNEE) shows a compositional bias: basic and acidic residues. Residues 1-27 (MISLDKDENEIEHHNEENSLVEQETAP) form a disordered region. A helical membrane pass occupies residues 129–151 (IVTVLIGIIVAIFVLVVIGIAAF).

The protein localises to the membrane. This is an uncharacterized protein from Bacillus subtilis (strain 168).